The following is a 129-amino-acid chain: MALPKAMRLKGHRTFDYIHKNSEKYYGKLMTFKIARSNPKILISHKNFNSLNNFKIAIAISKKVSKKAVVRNKIRRLLQDYFLKNFRKDKNHKPYWLLVNLKSSDSCNYESKLLQEFQHLIFKSGLLND.

It belongs to the RnpA family. In terms of assembly, consists of a catalytic RNA component (M1 or rnpB) and a protein subunit.

The catalysed reaction is Endonucleolytic cleavage of RNA, removing 5'-extranucleotides from tRNA precursor.. In terms of biological role, RNaseP catalyzes the removal of the 5'-leader sequence from pre-tRNA to produce the mature 5'-terminus. It can also cleave other RNA substrates such as 4.5S RNA. The protein component plays an auxiliary but essential role in vivo by binding to the 5'-leader sequence and broadening the substrate specificity of the ribozyme. The polypeptide is Ribonuclease P protein component (Prochlorococcus marinus (strain MIT 9515)).